The primary structure comprises 105 residues: Acylphosphatase (105 aa).

The 90-residue stretch at 16–105 folds into the Acylphosphatase-like domain; that stretch reads RLTAWVRGRV…RGGYSGFTQA (90 aa). Residues Arg-31 and Asn-49 contribute to the active site.

Belongs to the acylphosphatase family.

The enzyme catalyses an acyl phosphate + H2O = a carboxylate + phosphate + H(+). The chain is Acylphosphatase (acyP) from Acidothermus cellulolyticus (strain ATCC 43068 / DSM 8971 / 11B).